The primary structure comprises 398 residues: Signal-regulatory protein beta-1 isoform 3 (398 aa).

Residues 1–29 form the signal peptide; the sequence is MPVPASWPHLPSPFLLMTLLLGRLTGVAG. At 30-371 the chain is on the extracellular side; it reads EEELQVIQPD…GPALASAAPL (342 aa). In terms of domain architecture, Ig-like V-type spans 31 to 136; that stretch reads EELQVIQPDK…SPDHVEFKSG (106 aa). 2 disulfides stabilise this stretch: Cys54-Cys120 and Cys169-Cys227. 2 consecutive Ig-like C1-type domains span residues 147 to 246 and 253 to 347; these read PSAP…ANLS and PTLE…HDLK. Residues Asn244, Asn291, and Asn318 are each glycosylated (N-linked (GlcNAc...) asparagine). Cysteines 272 and 330 form a disulfide. Positions 337-354 are enriched in basic and acidic residues; it reads QPAVSKSHDLKVSAHPKE. The tract at residues 337–361 is disordered; the sequence is QPAVSKSHDLKVSAHPKEQGSNTAP. The chain crosses the membrane as a helical span at residues 372-392; sequence LIAFLLGPKVLLVVGVSVIYV. Over 393–398 the chain is Cytoplasmic; it reads YWKQKA.

It is found in the membrane. Its function is as follows. Immunoglobulin-like cell surface receptor involved in the negative regulation of receptor tyrosine kinase-coupled signaling processes. This chain is Signal-regulatory protein beta-1 isoform 3 (SIRPB1), found in Homo sapiens (Human).